A 330-amino-acid polypeptide reads, in one-letter code: 4-hydroxythreonine-4-phosphate dehydrogenase (330 aa).

Substrate-binding residues include histidine 136 and threonine 137. Residues histidine 166, histidine 211, and histidine 266 each contribute to the a divalent metal cation site. Residues lysine 274, asparagine 283, and arginine 292 each contribute to the substrate site.

It belongs to the PdxA family. Homodimer. The cofactor is Zn(2+). It depends on Mg(2+) as a cofactor. Requires Co(2+) as cofactor.

It is found in the cytoplasm. It carries out the reaction 4-(phosphooxy)-L-threonine + NAD(+) = 3-amino-2-oxopropyl phosphate + CO2 + NADH. The protein operates within cofactor biosynthesis; pyridoxine 5'-phosphate biosynthesis; pyridoxine 5'-phosphate from D-erythrose 4-phosphate: step 4/5. Catalyzes the NAD(P)-dependent oxidation of 4-(phosphooxy)-L-threonine (HTP) into 2-amino-3-oxo-4-(phosphooxy)butyric acid which spontaneously decarboxylates to form 3-amino-2-oxopropyl phosphate (AHAP). The chain is 4-hydroxythreonine-4-phosphate dehydrogenase from Serratia proteamaculans (strain 568).